The sequence spans 352 residues: Uroporphyrinogen decarboxylase (352 aa).

Substrate-binding positions include 26–30 (RQAGR), D76, Y153, S208, and H323.

The protein belongs to the uroporphyrinogen decarboxylase family. In terms of assembly, homodimer.

Its subcellular location is the cytoplasm. The enzyme catalyses uroporphyrinogen III + 4 H(+) = coproporphyrinogen III + 4 CO2. It functions in the pathway porphyrin-containing compound metabolism; protoporphyrin-IX biosynthesis; coproporphyrinogen-III from 5-aminolevulinate: step 4/4. Functionally, catalyzes the decarboxylation of four acetate groups of uroporphyrinogen-III to yield coproporphyrinogen-III. The sequence is that of Uroporphyrinogen decarboxylase from Prochlorococcus marinus (strain NATL2A).